The primary structure comprises 319 residues: ADP-L-glycero-D-manno-heptose-6-epimerase (319 aa).

Residues 10-11 (FI), 31-32 (DD), lysine 38, lysine 53, and 79-83 (EGACS) contribute to the NADP(+) site. The active-site Proton acceptor is the tyrosine 144. Residue lysine 148 participates in NADP(+) binding. Substrate is bound at residue asparagine 173. Residues valine 174 and lysine 182 each contribute to the NADP(+) site. Catalysis depends on lysine 182, which acts as the Proton acceptor. Residues serine 184, histidine 191, 205–208 (FEGC), arginine 218, and tyrosine 282 each bind substrate.

It belongs to the NAD(P)-dependent epimerase/dehydratase family. HldD subfamily. As to quaternary structure, homopentamer. It depends on NADP(+) as a cofactor.

The enzyme catalyses ADP-D-glycero-beta-D-manno-heptose = ADP-L-glycero-beta-D-manno-heptose. It participates in nucleotide-sugar biosynthesis; ADP-L-glycero-beta-D-manno-heptose biosynthesis; ADP-L-glycero-beta-D-manno-heptose from D-glycero-beta-D-manno-heptose 7-phosphate: step 4/4. Catalyzes the interconversion between ADP-D-glycero-beta-D-manno-heptose and ADP-L-glycero-beta-D-manno-heptose via an epimerization at carbon 6 of the heptose. The sequence is that of ADP-L-glycero-D-manno-heptose-6-epimerase from Aeromonas salmonicida (strain A449).